The primary structure comprises 672 residues: Beta-galactosidase bgaB (672 aa).

Position 109 (Arg109) interacts with substrate. Zn(2+) is bound at residue Cys113. Substrate is bound at residue Asn147. Residue Glu148 is the Proton donor of the active site. Positions 156, 158, and 161 each coordinate Zn(2+). Glu303 serves as the catalytic Nucleophile. Substrate is bound by residues Trp311 and 351–354 (EKFH).

The protein belongs to the glycosyl hydrolase 42 family.

The catalysed reaction is Hydrolysis of terminal non-reducing beta-D-galactose residues in beta-D-galactosides.. With respect to regulation, by divalent metal ions. Fe(2+), Zn(2+), Cu(2+), Pb(2+) and Sn(2+) inhibit 52, 76.6, 85.3, 100 and 100% of the enzyme activity, respectively. Other metal cations and EDTA do not inhibit this enzyme. Thiol reagents 2-mercaptoethanol and dithiothreitol have no effect on the activity. Sulfhydryl group-blocking reagents p-chloromercuribenzoic acid and iodoacetic acid inhibit 86.2 and 74% of the enzyme activity, respectively. Its function is as follows. Hydrolyzes 6-bromo-2-naphthyl-beta-D-galactopyranoside and o-nitrophenyl-beta-D-galactopyranoside (ONPG). Possesses a high level of transgalactosylation activity. Hydrolyzes lactose in milk. This chain is Beta-galactosidase bgaB (bgaB), found in Geobacillus kaustophilus.